Consider the following 186-residue polypeptide: Elongation factor P (186 aa).

It belongs to the elongation factor P family.

It is found in the cytoplasm. The protein operates within protein biosynthesis; polypeptide chain elongation. In terms of biological role, involved in peptide bond synthesis. Stimulates efficient translation and peptide-bond synthesis on native or reconstituted 70S ribosomes in vitro. Probably functions indirectly by altering the affinity of the ribosome for aminoacyl-tRNA, thus increasing their reactivity as acceptors for peptidyl transferase. This is Elongation factor P from Enterococcus faecalis (strain ATCC 700802 / V583).